Reading from the N-terminus, the 150-residue chain is Azurin (150 aa).

Residues 1 to 21 (MFKQVLGGMALMAAFSAPVLA) form the signal peptide. The 129-residue stretch at 22 to 150 (AECSVDIAGT…LMKGTLKLVD (129 aa)) folds into the Plastocyanin-like domain. Cys-24 and Cys-47 form a disulfide bridge. His-67, Cys-133, His-138, and Met-142 together coordinate Cu cation.

It is found in the periplasm. The chain is Azurin from Bordetella bronchiseptica (strain ATCC BAA-588 / NCTC 13252 / RB50) (Alcaligenes bronchisepticus).